A 56-amino-acid chain; its full sequence is MQPSYLLLTFAIIFVMVIMYSPAVEAKAGADADADAHADAGCSQFRRMRNLCGGKK.

The first 26 residues, 1–26 (MQPSYLLLTFAIIFVMVIMYSPAVEA), serve as a signal peptide directing secretion. Residues 27–40 (KAGADADADAHADA) constitute a propeptide that is removed on maturation. Residue Gly53 is modified to Glycine amide.

Post-translationally, contains 1 disulfide bond. In terms of tissue distribution, expressed by the venom gland.

It localises to the secreted. Venom protein with unknown function. Does not induce paralysis when a high dose is administered by intrathoracic injection into the blowfly Lucilia caesar. The sequence is that of U4-myrmicitoxin-Tb1a from Tetramorium bicarinatum (Tramp ant).